The following is a 412-amino-acid chain: Major facilitator superfamily domain-containing protein 3 (412 aa).

The next 12 membrane-spanning stretches (helical) occupy residues 10–30 (GLYLVQGLPYGLQSSLLPILL), 40–60 (VGLTKGLYAPWLLKLAWAPLV), 68–88 (VWLTLSTLSLGLVCGLLAVLP), 99–119 (TTVMGLLLLLNLGAAVQDVAL), 152–172 (GGLLVLFPTLSWPLLFLLLAA), 173–193 (TYWLAAALAWAAPALGRLPWP), 204–224 (YLLQDLLAVPGTLWTAGFVLT), 252–272 (LWSGLGAVTCSIAGSSLGGAL), 291–311 (LGSLACQTALLFHLNSPGASV), 320–340 (AVLLSLCLQQFFGGVVTTATF), 361–381 (FLATLELLGKLLLGTLAGVLA), and 384–404 (LGPHLCFAVFLVLSALPVLDL).

This sequence belongs to the major facilitator superfamily. In terms of tissue distribution, in brain, expressed in the cortex, striatum, hippocampus, hypothalamus, thalamus and cerebellum (at protein level). Widely expressed with highest levels in kidney and liver.

The protein localises to the membrane. This chain is Major facilitator superfamily domain-containing protein 3 (Mfsd3), found in Mus musculus (Mouse).